The chain runs to 374 residues: tRNA-specific 2-thiouridylase MnmA (374 aa).

Residues 15-22 (GMSGGVDS) and Met41 contribute to the ATP site. The interval 101–103 (NPD) is interaction with target base in tRNA. The active-site Nucleophile is Cys106. Cys106 and Cys206 are joined by a disulfide. Position 130 (Gly130) interacts with ATP. An interaction with tRNA region spans residues 156 to 158 (KDQ). Cys206 serves as the catalytic Cysteine persulfide intermediate. Residues 324–325 (RY) form an interaction with tRNA region.

It belongs to the MnmA/TRMU family.

Its subcellular location is the cytoplasm. It catalyses the reaction S-sulfanyl-L-cysteinyl-[protein] + uridine(34) in tRNA + AH2 + ATP = 2-thiouridine(34) in tRNA + L-cysteinyl-[protein] + A + AMP + diphosphate + H(+). Catalyzes the 2-thiolation of uridine at the wobble position (U34) of tRNA, leading to the formation of s(2)U34. This Aromatoleum aromaticum (strain DSM 19018 / LMG 30748 / EbN1) (Azoarcus sp. (strain EbN1)) protein is tRNA-specific 2-thiouridylase MnmA.